The chain runs to 494 residues: Cobyric acid synthase (494 aa).

The region spanning 252–444 (DLNIAVIRLP…LHGLFDNGPW (193 aa)) is the GATase cobBQ-type domain. The active-site Nucleophile is Cys333. His436 is an active-site residue.

Belongs to the CobB/CobQ family. CobQ subfamily.

Its pathway is cofactor biosynthesis; adenosylcobalamin biosynthesis. Its function is as follows. Catalyzes amidations at positions B, D, E, and G on adenosylcobyrinic A,C-diamide. NH(2) groups are provided by glutamine, and one molecule of ATP is hydrogenolyzed for each amidation. In Nostoc punctiforme (strain ATCC 29133 / PCC 73102), this protein is Cobyric acid synthase.